We begin with the raw amino-acid sequence, 77 residues long: EMBRYO SURROUNDING FACTOR 1-like protein 6 (77 aa).

Residues 1–25 (MSPSHFAILFIIVISLVPLHGYANG) form the signal peptide. 4 cysteine pairs are disulfide-bonded: Cys38-Cys53, Cys43-Cys72, Cys51-Cys68, and Cys54-Cys61.

The protein belongs to the MEG family.

The protein is EMBRYO SURROUNDING FACTOR 1-like protein 6 (ESFL6) of Arabidopsis thaliana (Mouse-ear cress).